Consider the following 410-residue polypeptide: Serine hydroxymethyltransferase (410 aa).

Residues Leu119 and 123–125 each bind (6S)-5,6,7,8-tetrahydrofolate; that span reads GHL. Lys228 bears the N6-(pyridoxal phosphate)lysine mark. (6S)-5,6,7,8-tetrahydrofolate is bound at residue 351-353; the sequence is SPF.

Belongs to the SHMT family. As to quaternary structure, homodimer. It depends on pyridoxal 5'-phosphate as a cofactor.

The protein resides in the cytoplasm. It carries out the reaction (6R)-5,10-methylene-5,6,7,8-tetrahydrofolate + glycine + H2O = (6S)-5,6,7,8-tetrahydrofolate + L-serine. It participates in one-carbon metabolism; tetrahydrofolate interconversion. Its pathway is amino-acid biosynthesis; glycine biosynthesis; glycine from L-serine: step 1/1. Functionally, catalyzes the reversible interconversion of serine and glycine with tetrahydrofolate (THF) serving as the one-carbon carrier. This reaction serves as the major source of one-carbon groups required for the biosynthesis of purines, thymidylate, methionine, and other important biomolecules. Also exhibits THF-independent aldolase activity toward beta-hydroxyamino acids, producing glycine and aldehydes, via a retro-aldol mechanism. The sequence is that of Serine hydroxymethyltransferase from Clostridium perfringens (strain ATCC 13124 / DSM 756 / JCM 1290 / NCIMB 6125 / NCTC 8237 / Type A).